The following is a 155-amino-acid chain: Ribosome maturation factor RimP (155 aa).

It belongs to the RimP family.

It localises to the cytoplasm. Its function is as follows. Required for maturation of 30S ribosomal subunits. This chain is Ribosome maturation factor RimP, found in Maridesulfovibrio salexigens (strain ATCC 14822 / DSM 2638 / NCIMB 8403 / VKM B-1763) (Desulfovibrio salexigens).